Here is a 112-residue protein sequence, read N- to C-terminus: 2Fe-2S ferredoxin (112 aa).

A 2Fe-2S ferredoxin-type domain is found at 1–104 (MPQIVILPHA…DLVVEIPKYT (104 aa)). [2Fe-2S] cluster-binding residues include Cys-42, Cys-48, Cys-51, and Cys-87.

The protein belongs to the adrenodoxin/putidaredoxin family. [2Fe-2S] cluster serves as cofactor.

In terms of biological role, ferredoxin are iron-sulfur proteins that transfer electrons in a wide variety of metabolic reactions. This chain is 2Fe-2S ferredoxin (fdx), found in Pseudomonas aeruginosa (strain ATCC 15692 / DSM 22644 / CIP 104116 / JCM 14847 / LMG 12228 / 1C / PRS 101 / PAO1).